The primary structure comprises 225 residues: Protein-L-isoaspartate O-methyltransferase (225 aa).

The active site involves S75.

Belongs to the methyltransferase superfamily. L-isoaspartyl/D-aspartyl protein methyltransferase family.

The protein localises to the cytoplasm. The enzyme catalyses [protein]-L-isoaspartate + S-adenosyl-L-methionine = [protein]-L-isoaspartate alpha-methyl ester + S-adenosyl-L-homocysteine. Functionally, catalyzes the methyl esterification of L-isoaspartyl residues in peptides and proteins that result from spontaneous decomposition of normal L-aspartyl and L-asparaginyl residues. It plays a role in the repair and/or degradation of damaged proteins. This is Protein-L-isoaspartate O-methyltransferase from Stenotrophomonas maltophilia (strain K279a).